The following is a 420-amino-acid chain: 3-isopropylmalate dehydratase large subunit (420 aa).

3 residues coordinate [4Fe-4S] cluster: C300, C360, and C363.

It belongs to the aconitase/IPM isomerase family. LeuC type 2 subfamily. In terms of assembly, heterodimer of LeuC and LeuD. The cofactor is [4Fe-4S] cluster.

It catalyses the reaction (2R,3S)-3-isopropylmalate = (2S)-2-isopropylmalate. It functions in the pathway amino-acid biosynthesis; L-leucine biosynthesis; L-leucine from 3-methyl-2-oxobutanoate: step 2/4. Catalyzes the isomerization between 2-isopropylmalate and 3-isopropylmalate, via the formation of 2-isopropylmaleate. This is 3-isopropylmalate dehydratase large subunit from Halothermothrix orenii (strain H 168 / OCM 544 / DSM 9562).